We begin with the raw amino-acid sequence, 138 residues long: Putative nickel-responsive regulator (138 aa).

Positions 78, 89, 91, and 97 each coordinate Ni(2+).

The protein belongs to the transcriptional regulatory CopG/NikR family. It depends on Ni(2+) as a cofactor.

In terms of biological role, transcriptional regulator. This chain is Putative nickel-responsive regulator, found in Thermococcus onnurineus (strain NA1).